The following is a 631-amino-acid chain: RING finger protein 112 (631 aa).

Residues 57-98 form an RING-type zinc finger; sequence CSICLERLRDPISLDCGHDFCIRCFSTHRLPGCEPPCCPECR. The tract at residues 131-631 is interaction with ZBTB16; the sequence is PVRAEPLLLV…GDREPLLQEE (501 aa). The 232-residue stretch at 166-397 folds into the GB1/RHD3-type G domain; it reads DTPVCLLAVL…YVSDVLSAAP (232 aa). 318–319 serves as a coordination point for GTP; the sequence is RD. The next 2 helical transmembrane spans lie at 547–567 and 580–600; these read LAAVGGAVGAGLMGLAGGVVG and GMVAAGAAVGATGAAVVGGGV.

The protein belongs to the TRAFAC class dynamin-like GTPase superfamily. GB1/RHD3 GTPase family. GB1 subfamily. As to quaternary structure, self-associates. Interacts with SP1 in an oxidative stress-regulated manner. Interacts with SIGMAR1 in an oxidative stress-regulated manner. Interacts with ZBTB16 (via C2H2-type zinc finger domains 1 and 2). Auto-ubiquitinated. In terms of tissue distribution, predominantly expressed in brain. Decreased expression in glioma brain tumors as compared to normal brains (at protein level).

Its subcellular location is the membrane. It is found in the cytoplasm. It localises to the nucleus. The protein resides in the nuclear body. The protein localises to the nucleoplasm. Its subcellular location is the endosome. It is found in the cytoplasmic vesicle. It localises to the secretory vesicle. The protein resides in the synaptic vesicle. The protein localises to the postsynaptic density. Its subcellular location is the perikaryon. It is found in the cell projection. It localises to the neuron projection. It carries out the reaction S-ubiquitinyl-[E2 ubiquitin-conjugating enzyme]-L-cysteine + [acceptor protein]-L-lysine = [E2 ubiquitin-conjugating enzyme]-L-cysteine + N(6)-ubiquitinyl-[acceptor protein]-L-lysine.. It participates in protein modification; protein ubiquitination. Its function is as follows. E3 ubiquitin-protein ligase that plays an important role in neuronal differentiation, including neurogenesis and gliogenesis, during brain development. During embryonic development initiates neuronal differentiation by inducing cell cycle arrest at the G0/G1 phase through up-regulation of cell-cycle regulatory proteins. Plays a role not only in the fetal period during the development of the nervous system, but also in the adult brain, where it is involved in the maintenance of neural functions and protection of the nervous tissue cells from oxidative stress-induced damage. Exhibits GTPase and E3 ubiquitin-protein ligase activities. Regulates dendritic spine density and synaptic neurotransmission; its ability to hydrolyze GTP is involved in the maintenance of dendritic spine density. The protein is RING finger protein 112 (RNF112) of Homo sapiens (Human).